The chain runs to 495 residues: Internal alternative NAD(P)H-ubiquinone oxidoreductase A1, mitochondrial (495 aa).

The transit peptide at 1–41 (MPWFKNLIKISKTITNQSSSYKSITPLASPLLTQFLQFTKQ) directs the protein to the mitochondrion. An FAD-binding site is contributed by 61–91 (RIVVLGSGWAGCRLMKDIDTNIYDVVCVSPR). 228–264 (LHCVVVGGGPTGVEFSGELSDFILKDVHQRYAHVKDY) is an NAD(+) binding site. Positions 486 to 495 (LVFGRDISRI) match the Microbody targeting signal motif.

The protein belongs to the NADH dehydrogenase family. FAD is required as a cofactor.

Its subcellular location is the mitochondrion inner membrane. It localises to the peroxisome. It carries out the reaction a quinone + NADH + H(+) = a quinol + NAD(+). The catalysed reaction is a ubiquinone + NADH + H(+) = a ubiquinol + NAD(+). Functionally, alternative NADH-ubiquinone oxidoreductase which catalyzes the oxidation of mitochondrial NADH does not translocate protons across the inner mitochondrial membrane. The sequence is that of Internal alternative NAD(P)H-ubiquinone oxidoreductase A1, mitochondrial (NDA1) from Solanum tuberosum (Potato).